We begin with the raw amino-acid sequence, 719 residues long: Developmental regulator flbA (719 aa).

Positions 1–17 (MPTSISTAPLSQGSPPS) are enriched in polar residues. Disordered stretches follow at residues 1–39 (MPTS…STAA), 117–141 (IGST…SRKA), and 155–190 (LSPP…AAER). Composition is skewed to low complexity over residues 123–135 (SSLR…GSLQ) and 158–171 (PLSD…QSSS). Residues 214-411 (QTSSRLLRMT…QDGPNVKSSV (198 aa)) are fungal-DR. The region spanning 425 to 511 (GLVGVKMARE…SKNAIYAITE (87 aa)) is the DEP domain. An RGS domain is found at 540–685 (SNNARLNHIL…FLRDPKYSAI (146 aa)). The tract at residues 694–719 (LIGGGRSYSPTPGNVPERSMSRSQRS) is disordered.

Required for asexual sporulation and normal colony development. May be involved in brlA activation. Could play a regulatory role in controlling the flug-initiated signal transduction pathway that triggers the asexual reproduction. This is Developmental regulator flbA (flbA) from Emericella nidulans (strain FGSC A4 / ATCC 38163 / CBS 112.46 / NRRL 194 / M139) (Aspergillus nidulans).